The following is a 263-amino-acid chain: Thiazole synthase (263 aa).

K100 serves as the catalytic Schiff-base intermediate with DXP. 1-deoxy-D-xylulose 5-phosphate contacts are provided by residues G161, 188–189 (AG), and 210–211 (NS).

The protein belongs to the ThiG family. Homotetramer. Forms heterodimers with either ThiH or ThiS.

It is found in the cytoplasm. The catalysed reaction is [ThiS sulfur-carrier protein]-C-terminal-Gly-aminoethanethioate + 2-iminoacetate + 1-deoxy-D-xylulose 5-phosphate = [ThiS sulfur-carrier protein]-C-terminal Gly-Gly + 2-[(2R,5Z)-2-carboxy-4-methylthiazol-5(2H)-ylidene]ethyl phosphate + 2 H2O + H(+). It participates in cofactor biosynthesis; thiamine diphosphate biosynthesis. Catalyzes the rearrangement of 1-deoxy-D-xylulose 5-phosphate (DXP) to produce the thiazole phosphate moiety of thiamine. Sulfur is provided by the thiocarboxylate moiety of the carrier protein ThiS. In vitro, sulfur can be provided by H(2)S. The protein is Thiazole synthase of Pseudoalteromonas translucida (strain TAC 125).